A 519-amino-acid polypeptide reads, in one-letter code: C-glycoside 3-oxidase (519 aa).

Residue Glu-41 coordinates FAD. Residues 43-93 (GPTVSNPPGAHVKNIEDPERRSHAQRASEGPGAGAETVNSPGAVKSGERRA) form a disordered region. Residues 55–64 (KNIEDPERRS) show a composition bias toward basic and acidic residues. FAD contacts are provided by Ser-118, Asn-120, Met-124, Thr-129, Ala-131, and Val-234. His-440 functions as the Proton acceptor in the catalytic mechanism. FAD is bound by residues Asn-474 and Thr-486.

This sequence belongs to the GMC oxidoreductase family. As to quaternary structure, monomer. It depends on FAD as a cofactor.

The enzyme catalyses isovitexin + O2 = 3''-dehydroisovitexin + H2O2. It carries out the reaction isoorientin + O2 = 3''-dehydroisoorientin + H2O2. It catalyses the reaction mangiferin + O2 = 3'-dehydromangiferin + H2O2. In terms of biological role, FAD-dependent C-glycoside-metabolizing enzyme that participates in the degradation of certain C-glycosides by catalyzing the oxidation of the hydroxyl group at the C3 position of the sugar moiety. Shows oxidase activity toward various C-glycosides such as isovitexin, isoorientin and mangiferin but cannot use carminic acid, puerarin, orientin or aloesin. Shows weak activity (100 to 1000-fold lower) with O-glycosides. Probably plays a crucial role in the metabolism of C-glycosides in nature. In Arthrobacter globiformis (strain ATCC 8010 / DSM 20124 / JCM 1332 / NBRC 12137 / NCIMB 8907 / NRRL B-2979 / 168), this protein is C-glycoside 3-oxidase.